A 290-amino-acid chain; its full sequence is UPF0761 membrane protein YihY (290 aa).

Transmembrane regions (helical) follow at residues 44–64, 104–124, 140–160, 183–203, 210–230, and 244–264; these read LLSL…FPMF, VGAC…DSAL, FAVY…SLAI, ILPL…VPTT, ALVG…GFAL, and VLAV…IVLL.

It belongs to the UPF0761 family.

The protein resides in the cell inner membrane. The sequence is that of UPF0761 membrane protein YihY from Salmonella agona (strain SL483).